A 162-amino-acid polypeptide reads, in one-letter code: Retinoic acid receptor responder protein 2 (162 aa).

An N-terminal signal peptide occupies residues 1–20 (MKCLLISLALWLGTVGTRGT). Disulfide bonds link cysteine 79/cysteine 89, cysteine 100/cysteine 119, and cysteine 103/cysteine 134. A propeptide spanning residues 157 to 162 (RALRTK) is cleaved from the precursor.

In terms of processing, secreted in an inactive precursor form, prochemerin, which is proteolytically processed by a variety of extracellular proteases to generate forms with differing levels of bioactivity. For example, the removal of six amino acids results in chemerin-156, which exhibits the highest activity, while removal of seven amino acids results in chemerin-155 which has slightly less activity. Some proteases are able to cleave at more than one site and chemerin forms may be sequentially processed by different enzymes to modulate activity levels. The coordinated expression and activity of chemerin-modifying enzymes is essential for regulating its bioactivation, inactivation and, consequently, biological function. Cathepsin G cleaves seven C-terminal amino acids from prochemerin (chemerin-155), elastase is able to cleave six (chemerin-156), eight (chemerin-154) or eleven (chemerin-151), plasmin cleaves five amino acids (chemerin-157), and tryptase cleaves five (chemerin-157) or eight (chemerin-154). Multiple cleavages might be required to fully activate chemerin, with an initial tryptase cleavage resulting in chemerin with low activity (chemerin-157), and a second cleavage by carboxypeptidase N or B producing highly active chemerin (chemerin-156). In terms of tissue distribution, expressed in the differentiated adipocytes (at protein level). Abundantly expressed in the liver, adipose tissue including visceral, epididymal, and brown adipose tissue.

It is found in the secreted. Functionally, adipocyte-secreted protein (adipokine) that regulates adipogenesis, metabolism and inflammation through activation of the chemokine-like receptor 1 (CMKLR1). Also acts as a ligand for CMKLR2. Can also bind to C-C chemokine receptor-like 2 (CCRL2), but with a lower affinity than it does to CMKLR1 or CMKLR2. Positively regulates adipocyte differentiation, modulates the expression of adipocyte genes involved in lipid and glucose metabolism and might play a role in angiogenesis, a process essential for the expansion of white adipose tissue. Also acts as a pro-inflammatory adipokine, causing an increase in secretion of pro-inflammatory and prodiabetic adipokines, which further impair adipose tissue metabolic function and have negative systemic effects including impaired insulin sensitivity, altered glucose and lipid metabolism, and a decrease in vascular function in other tissues. Can have both pro- and anti-inflammatory properties depending on the modality of enzymatic cleavage by different classes of proteases. Acts as a chemotactic factor for leukocyte populations expressing CMKLR1, particularly immature plasmacytoid dendritic cells, but also immature myeloid DCs, macrophages and natural killer cells. Exerts an anti-inflammatory role by preventing TNF/TNFA-induced VCAM1 expression and monocytes adhesion in vascular endothelial cells. The effect is mediated via inhibiting activation of NF-kappa-B and CRK/p38 through stimulation of AKT1/NOS3 signaling and nitric oxide production. Exhibits an antimicrobial function in the skin. This is Retinoic acid receptor responder protein 2 (Rarres2) from Mus musculus (Mouse).